Consider the following 274-residue polypeptide: Large ribosomal subunit protein uL2 (274 aa).

The disordered stretch occupies residues 223-274 (VAMNPVDHPHGGGEGRTSGGRHPVTPWGVPTKGYKTRSNKRTDKYIVRRRTK).

The protein belongs to the universal ribosomal protein uL2 family. As to quaternary structure, part of the 50S ribosomal subunit. Forms a bridge to the 30S subunit in the 70S ribosome.

In terms of biological role, one of the primary rRNA binding proteins. Required for association of the 30S and 50S subunits to form the 70S ribosome, for tRNA binding and peptide bond formation. It has been suggested to have peptidyltransferase activity; this is somewhat controversial. Makes several contacts with the 16S rRNA in the 70S ribosome. In Shewanella amazonensis (strain ATCC BAA-1098 / SB2B), this protein is Large ribosomal subunit protein uL2.